Reading from the N-terminus, the 227-residue chain is 2,3-bisphosphoglycerate-dependent phosphoglycerate mutase (227 aa).

Residues R8–N15, T21–G22, R58, E110–Y113, K121, R137–R138, and G181–N182 contribute to the substrate site. H9 acts as the Tele-phosphohistidine intermediate in catalysis. The Proton donor/acceptor role is filled by E110.

Belongs to the phosphoglycerate mutase family. BPG-dependent PGAM subfamily.

The catalysed reaction is (2R)-2-phosphoglycerate = (2R)-3-phosphoglycerate. It functions in the pathway carbohydrate degradation; glycolysis; pyruvate from D-glyceraldehyde 3-phosphate: step 3/5. Catalyzes the interconversion of 2-phosphoglycerate and 3-phosphoglycerate. This Chlamydia caviae (strain ATCC VR-813 / DSM 19441 / 03DC25 / GPIC) (Chlamydophila caviae) protein is 2,3-bisphosphoglycerate-dependent phosphoglycerate mutase.